Reading from the N-terminus, the 175-residue chain is Clathrin-associated protein AP-3 complex component APS3 (175 aa).

It belongs to the adaptor complexes small subunit family. Adaptor protein complex 3 (AP-3) is a heterotetramer composed of 2 large adaptins, a medium adaptin and a small adaptin.

Its subcellular location is the golgi apparatus. The protein localises to the cytoplasmic vesicle membrane. Functionally, part of the AP-3 complex, an adapter-related complex which is not clathrin-associated. The complex is associated with the Golgi region as well as more peripheral structures. It facilitates the budding of vesicles from the Golgi membrane. Involved in vacuolar trafficking and contributes to hyphal growth and pathogenesis. The polypeptide is Clathrin-associated protein AP-3 complex component APS3 (APS3) (Candida albicans (strain SC5314 / ATCC MYA-2876) (Yeast)).